The sequence spans 201 residues: MQTSPLLTQLMEALRCLPGVGPKSAQRMAFTLLQRDRSGGMRLAQALTRAMSEIGHCADCRTFTEQDVCNICTNPRRQENGQICVVESPADIYAIEQTGQFSGRYFVLMGHLSPLDGIGPDDIGLDRLEQRLESETLTEVILATNPTVEGEATANYIGELCAQYGVSASRIAHGVPVGGELEMVDGTTLSHSLAGRHKLIF.

The segment at 57 to 72 (CADCRTFTEQDVCNIC) adopts a C4-type zinc-finger fold. Residues 81 to 176 (GQICVVESPA…SASRIAHGVP (96 aa)) enclose the Toprim domain.

Belongs to the RecR family.

May play a role in DNA repair. It seems to be involved in an RecBC-independent recombinational process of DNA repair. It may act with RecF and RecO. In Enterobacter sp. (strain 638), this protein is Recombination protein RecR.